A 43-amino-acid chain; its full sequence is Mu-conotoxin-like CalTx 12.2.1E (43 aa).

Residue Arg1 is a propeptide. 4 disulfide bridges follow: Cys4–Cys16, Cys11–Cys24, Cys18–Cys29, and Cys23–Cys35. Trp31 carries the post-translational modification 6'-bromotryptophan. At Pro36 the chain carries 4-hydroxyproline. Position 40 is a 6'-bromotryptophan (Trp40).

As to expression, expressed by the venom duct.

It is found in the secreted. In terms of biological role, mu-conotoxins block voltage-gated sodium channels. This toxin reversibly blocks voltage-gated sodium channel in cephalopods, with no alteration in the voltage dependence of sodium conductance or on the kinetics of inactivation. The chain is Mu-conotoxin-like CalTx 12.2.1E from Californiconus californicus (California cone).